The primary structure comprises 792 residues: Ribonucleoside-diphosphate reductase large subunit (792 aa).

Residues 1-92 (MHVIKRDGRQ…VSNLHKEAKK (92 aa)) enclose the ATP-cone domain. ATP contacts are provided by residues 5–6 (KR), 11–17 (ERVMFDK), Thr-53, and Asp-57. Position 17 is an N6-acetyllysine (Lys-17). GDP is bound by residues Ser-202 and Ser-217. A disulfide bond links Cys-218 and Cys-444. DTTP is bound by residues 226–228 (DSI), Lys-243, Arg-256, and 263–264 (AG). Lys-376 bears the N6-acetyllysine mark. Ser-427 serves as the catalytic Proton acceptor. Catalysis depends on Cys-429, which acts as the Cysteine radical intermediate. GDP is bound by residues Glu-431 and 604 to 607 (TAST). Glu-431 (proton acceptor) is an active-site residue. The residue at position 751 (Thr-751) is a Phosphothreonine.

This sequence belongs to the ribonucleoside diphosphate reductase large chain family. As to quaternary structure, heterodimer of a large and a small subunit. Interacts with RRM2B. Interacts with AHCYL1 which inhibits its activity.

The protein localises to the cytoplasm. The enzyme catalyses a 2'-deoxyribonucleoside 5'-diphosphate + [thioredoxin]-disulfide + H2O = a ribonucleoside 5'-diphosphate + [thioredoxin]-dithiol. Its activity is regulated as follows. Under complex allosteric control mediated by deoxynucleoside triphosphates and ATP binding to separate specificity and activation sites on the M1 subunit. The type of nucleotide bound at the specificity site determines substrate preference. It seems probable that ATP makes the enzyme reduce CDP and UDP, dGTP favors ADP reduction and dTTP favors GDP reduction. Stimulated by ATP and inhibited by dATP binding to the activity site, the dATP inhibition is mediated by AHCYL1 which stabilizes dATP in the site. Provides the precursors necessary for DNA synthesis. Catalyzes the biosynthesis of deoxyribonucleotides from the corresponding ribonucleotides. The chain is Ribonucleoside-diphosphate reductase large subunit (RRM1) from Pongo abelii (Sumatran orangutan).